The chain runs to 248 residues: GTP cyclohydrolase 1 type 2 homolog (248 aa).

Residues H64, H65, D101, H216, and E220 each contribute to the a divalent metal cation site.

The protein belongs to the GTP cyclohydrolase I type 2/NIF3 family. Homohexamer.

The polypeptide is GTP cyclohydrolase 1 type 2 homolog (Borreliella burgdorferi (strain ATCC 35210 / DSM 4680 / CIP 102532 / B31) (Borrelia burgdorferi)).